The following is a 387-amino-acid chain: Phosphoglycerate kinase (387 aa).

Substrate-binding positions include 21–23 (DLN), arginine 36, 59–62 (HLGR), arginine 113, and arginine 146. ATP-binding positions include lysine 197, glutamate 314, and 340-343 (GGDT).

This sequence belongs to the phosphoglycerate kinase family. Monomer.

The protein localises to the cytoplasm. It catalyses the reaction (2R)-3-phosphoglycerate + ATP = (2R)-3-phospho-glyceroyl phosphate + ADP. It participates in carbohydrate degradation; glycolysis; pyruvate from D-glyceraldehyde 3-phosphate: step 2/5. The protein is Phosphoglycerate kinase of Pseudomonas putida (strain ATCC 700007 / DSM 6899 / JCM 31910 / BCRC 17059 / LMG 24140 / F1).